The primary structure comprises 308 residues: tRNA pseudouridine synthase B (308 aa).

The active-site Nucleophile is the aspartate 44.

Belongs to the pseudouridine synthase TruB family. Type 1 subfamily.

It carries out the reaction uridine(55) in tRNA = pseudouridine(55) in tRNA. Functionally, responsible for synthesis of pseudouridine from uracil-55 in the psi GC loop of transfer RNAs. This is tRNA pseudouridine synthase B from Nitratidesulfovibrio vulgaris (strain DSM 19637 / Miyazaki F) (Desulfovibrio vulgaris).